The chain runs to 116 residues: Iron-sulfur cluster insertion protein ErpA (116 aa).

Iron-sulfur cluster is bound by residues cysteine 44, cysteine 108, and cysteine 110.

This sequence belongs to the HesB/IscA family. In terms of assembly, homodimer. The cofactor is iron-sulfur cluster.

In terms of biological role, required for insertion of 4Fe-4S clusters for at least IspG. This is Iron-sulfur cluster insertion protein ErpA from Shewanella sp. (strain ANA-3).